The chain runs to 130 residues: UPF0251 protein Mevan_1492 (130 aa).

This sequence belongs to the UPF0251 family.

The polypeptide is UPF0251 protein Mevan_1492 (Methanococcus vannielii (strain ATCC 35089 / DSM 1224 / JCM 13029 / OCM 148 / SB)).